A 396-amino-acid polypeptide reads, in one-letter code: Tryptophan synthase beta chain (396 aa).

N6-(pyridoxal phosphate)lysine is present on K86.

This sequence belongs to the TrpB family. Tetramer of two alpha and two beta chains. Pyridoxal 5'-phosphate serves as cofactor.

It carries out the reaction (1S,2R)-1-C-(indol-3-yl)glycerol 3-phosphate + L-serine = D-glyceraldehyde 3-phosphate + L-tryptophan + H2O. The protein operates within amino-acid biosynthesis; L-tryptophan biosynthesis; L-tryptophan from chorismate: step 5/5. The beta subunit is responsible for the synthesis of L-tryptophan from indole and L-serine. This is Tryptophan synthase beta chain from Aliivibrio fischeri (strain MJ11) (Vibrio fischeri).